A 728-amino-acid chain; its full sequence is Peroxisome biogenesis protein 5 (728 aa).

Residues 1–58 (MAMRDLVNGGAACAVPGSSSSSNPLGALTNALLGSSSKTQERLKEIPNANRSGPRPQF) are disordered. Positions 11-97 (AACAVPGSSS…FRGFRSVDQN (87 aa)) are amphipathic helix 1 (AH1). A Glycyl cysteine thioester (Cys-Gly) (interchain with G-Cter in ubiquitin) cross-link involves residue Cys-13. 3 repeat units span residues 240–244 (WAAEF), 257–261 (WVQSF), and 270–274 (WATEF). 3 consecutive short sequence motifs (wxxxF/Y motif) follow at residues 240 to 244 (WAAEF), 257 to 261 (WVQSF), and 270 to 274 (WATEF). Residues 288 to 311 (SMDMQNIAAMEQTRKLAHTLSQDG) are amphipathic helix 3 (AH3). Repeat copies occupy residues 348–352 (WATEY), 362–366 (WADQF), 378–382 (WADEF), 396–400 (WVNEF), 408–412 (WIDEF), and 425–429 (WANAY). 6 consecutive short sequence motifs (wxxxF/Y motif) follow at residues 348 to 352 (WATEY), 362 to 366 (WADQF), 378 to 382 (WADEF), 396 to 400 (WVNEF), 408 to 412 (WIDEF), and 425 to 429 (WANAY). The segment at 392–417 (AEDQWVNEFSKLNVDDWIDEFAEGPV) is amphipathic helix 4 (AH4). TPR repeat units follow at residues 491–524 (AEGWRLLGVTHAENDDDQQAIAAMMRAQEADPTN), 590–623 (ADVHIVLGVLYNLSREFDRAITSFQTALQLKPND), 625–657 (SLWNKLGATQANSVQSADAISAYQQALDLKPNY), and 658–691 (VRAWANMGISYANQGMYKESIPYYVRALAMNPKA).

Belongs to the peroxisomal targeting signal receptor family. As to quaternary structure, interacts (via WxxxF/Y and LVxEF motifs) with PEX14; promoting translocation through the PEX13-PEX14 docking complex. Interacts with PEX7, promoting peroxisomal import of proteins containing a C-terminal PTS2-type peroxisomal targeting signal. Interacts with LACS7. Monoubiquitinated at Cys-13 by PEX2 during PEX5 passage through the retrotranslocation channel. Cys-13 monoubiquitination acts as a recognition signal for the PEX1-PEX6 complex and is required for PEX5 extraction and export from peroxisomes. When PEX5 recycling is compromised, polyubiquitinated by PEX10 during its passage through the retrotranslocation channel, leading to its degradation. As to expression, expressed in flowers, siliques, leaves and roots.

It is found in the cytoplasm. The protein localises to the cytosol. It localises to the peroxisome matrix. Its function is as follows. Receptor that mediates peroxisomal import of proteins containing a C-terminal PTS1-type tripeptide peroxisomal targeting signal (SKL-type). Binds to cargo proteins containing a PTS1 peroxisomal targeting signal in the cytosol, and translocates them into the peroxisome matrix by passing through the PEX13-PEX14 docking complex along with cargo proteins. PEX5 receptor is then retrotranslocated into the cytosol, leading to release of bound cargo in the peroxisome matrix, and reset for a subsequent peroxisome import cycle. In addition to promoting peroxisomal translocation of proteins containing a PTS1 peroxisomal targeting signal, mediates peroxisomal import of proteins containing a C-terminal PTS2-type peroxisomal targeting signal via its interaction with PEX7. Interaction with PEX7 only takes place when PEX7 is associated with cargo proteins containing a PTS2 peroxisomal targeting signal. PEX7 along with PTS2-containing cargo proteins are then translocated through the PEX13-PEX14 docking complex together with PEX5. Necessary for the developmental elimination of obsolete peroxisome matrix proteins. This Arabidopsis thaliana (Mouse-ear cress) protein is Peroxisome biogenesis protein 5 (PEX5).